A 113-amino-acid polypeptide reads, in one-letter code: Bactofilin BacN (113 aa).

It belongs to the bactofilin family. In terms of assembly, interacts with BacO and BacP, the 3 proteins colocalize as an extended structure.

The protein resides in the cytoplasm. It localises to the cytoskeleton. Functionally, a non-essential component of the chromosome segregation machinery. Positions the ParA-ParB-parS chromosome segregation machinery within the cell; BacP seems to be the most important bactofilin in this process. Forms a heteropolymeric, subpolar scaffold in the cell; BacP probably forms the core, BacO contributes to position and integrity while BacN does not seem to contribute to assembly. The sequence is that of Bactofilin BacN from Myxococcus xanthus (strain DK1622).